We begin with the raw amino-acid sequence, 272 residues long: RELT-like protein 1 (272 aa).

The signal sequence occupies residues 1–23 (MALWGLPGSAVLAASVFVGGAVS). Topologically, residues 24 to 58 (SPLVAADNTGSHTLHSRAETTPSSPTNNPGNGHPE) are extracellular. The tract at residues 33–52 (GSHTLHSRAETTPSSPTNNP) is disordered. A helical transmembrane segment spans residues 59–79 (YIAYVLVPVFFVMGLLGVLIC). At 80–272 (HLLKKKGYRC…PVKRERSDTE (193 aa)) the chain is on the cytoplasmic side. Residues 90–114 (TTEAEQEVEEEKVEKIELNDSINEN) adopt a coiled-coil conformation. A phosphoserine mark is found at serine 110 and serine 115. 2 disordered regions span residues 146–171 (DIES…PGAT) and 235–272 (EHKS…SDTE). The segment covering 156–166 (PGSPPVSPGPL) has biased composition (pro residues). Residues 235 to 245 (EHKSNQKERRS) are compositionally biased toward basic and acidic residues. Phosphoserine occurs at positions 245 and 248.

Belongs to the RELT family. As to quaternary structure, interacts with RELT, RELL2, OXSR1 and PLSCR1.

It localises to the cell membrane. Functionally, induces activation of MAPK14/p38 cascade, when overexpressed. Induces apoptosis, when overexpressed. In Mus musculus (Mouse), this protein is RELT-like protein 1 (Rell1).